The primary structure comprises 233 residues: MTTSVVTLSELLAARVHLGHRFNKWNPKMVSFIYAERNKVHIIDLVQTAFLLGEACDYVKLLAKKGKKFLFVGTRQELNTILAEEAERCNSFYINQRWLGGLLTNWVTIKSRVQALEKKESEGFFNSLPKKESARLKKELDKLRRYFNGIRKMNTLPDVVIIIDQRKDLTAVQECNKLNIPTICIVDTNCNPDIVDLPIPANDDAICSVKLILGKLVDFIKEGQIERELSKTS.

The protein belongs to the universal ribosomal protein uS2 family.

It localises to the plastid. Its subcellular location is the chloroplast. The protein is Small ribosomal subunit protein uS2c (rps2) of Galdieria sulphuraria (Red alga).